The primary structure comprises 818 residues: MLKLKFRWNKPDDGPRVKRQKSQQLTLDSPEGSETSSRPGGGYDNDRDVNGTFKRPWDITKIPGYNQTYVNEASLDKFAAYLKEEEVPVESSTPVSSEEMLPLEPVQKEYITSKHDWTPVFSVLKNNNSVNKRKMSHTALKSDFKHYLDMYDKEEKRRRGKSKKDKEGSEGDKTKTKEPKELVRKSVFSSILGVFSIFSKTKDGRKLKRDEIGEGIGFWLMRWPALFFIGMWLLFLTTIYASVRVLVAGYENILTWRGKRAKLRKVLRGARTYEQWVQAAQDLDVELGNAEWRENPKFGYYDHVTISKLTKMVRKLRLQDQAEDLSNILQGCIKNNFAGTESSTLYSQTYYGTKKVVEQWNEELGKAVTYVLESPKIDDEEKRDLFRLYSKNFGKSALCLSGGGCFAYLHFGIVKAMLDQDLLPQIISGTSGGALIAALACTRTDEELRQILVPELAYKITACWEPFPKWVFRWWRTGARFDSVDWARRSCWFTLGDMTFKEAYQRTGRILNVSTVPADPHSPVILCNYITSPDCLIWSALLASAAVPGILNPVMLMNKTKSGDIVPFSFGSKWKDGSLRTDIPVDALNTYFNVNCSIVSQVNPHIALFFYAPRGTVGRPVSHRKGKGWRGGFLGAALESMIKLEIRKWLKFIKAVELLPRFVDQDWTNVWLQRFSGSVTLWPKIHLADFWHILGDPWPEKMEDLLYRGQQCAFPKLLFLKHRMNIEKRIRNGRQATRHRKRKLEETDVCDLVRKTFSESDPDSDVKHSFVFPALMAPRSAGTDISSSNSDYDHEPQWEMDEGDSFLTADEEYPTTIL.

2 disordered regions span residues 1–50 and 154–178; these read MLKL…RDVN and EEKR…KTKE. Polar residues predominate over residues 22-38; that stretch reads SQQLTLDSPEGSETSSR. The span at 164–178 shows a compositional bias: basic and acidic residues; the sequence is KDKEGSEGDKTKTKE. Residues 223–243 form a helical membrane-spanning segment; it reads WPALFFIGMWLLFLTTIYASV. The PNPLA domain maps to 398–589; sequence LCLSGGGCFA…RTDIPVDALN (192 aa). Positions 429-433 match the GXSXG motif; the sequence is GTSGG. The active-site Nucleophile is the serine 431. The active-site Proton acceptor is the aspartate 576. The disordered stretch occupies residues 781–805; that stretch reads AGTDISSSNSDYDHEPQWEMDEGDS.

Belongs to the PLPL family.

It is found in the membrane. In terms of biological role, probable lipid hydrolase. This is Patatin-like phospholipase domain-containing protein YALI0D16379g from Yarrowia lipolytica (strain CLIB 122 / E 150) (Yeast).